A 126-amino-acid chain; its full sequence is Small ribosomal subunit protein uS13 (126 aa).

The interval 94 to 126 is disordered; that stretch reads GLPVRGQKTRNNAHTVKGKPKAAIAGKKKNKVN. Positions 109–126 are enriched in basic residues; it reads VKGKPKAAIAGKKKNKVN.

This sequence belongs to the universal ribosomal protein uS13 family. Part of the 30S ribosomal subunit. Forms a loose heterodimer with protein S19. Forms two bridges to the 50S subunit in the 70S ribosome.

Located at the top of the head of the 30S subunit, it contacts several helices of the 16S rRNA. In the 70S ribosome it contacts the 23S rRNA (bridge B1a) and protein L5 of the 50S subunit (bridge B1b), connecting the 2 subunits; these bridges are implicated in subunit movement. Contacts the tRNAs in the A and P-sites. The sequence is that of Small ribosomal subunit protein uS13 from Aster yellows witches'-broom phytoplasma (strain AYWB).